The sequence spans 365 residues: Glycosyltransferase 8 domain-containing protein 1 (365 aa).

Residues 1–4 lie on the Cytoplasmic side of the membrane; sequence MTVR. A helical; Signal-anchor for type II membrane protein membrane pass occupies residues 5–22; the sequence is RVNVVILVLLVVAFLIVL. Residues 23 to 365 are Lumenal-facing; the sequence is HRNLLNLNDF…HPIRKHVEEK (343 aa). N-linked (GlcNAc...) asparagine glycosylation is found at asparagine 102, asparagine 181, asparagine 245, and asparagine 253.

Belongs to the glycosyltransferase 8 family.

The protein resides in the membrane. This is Glycosyltransferase 8 domain-containing protein 1 (glt8d1) from Danio rerio (Zebrafish).